Reading from the N-terminus, the 641-residue chain is Bifunctional protein glk (641 aa).

The tract at residues 1 to 340 (MSTGAQTKAA…QLSNRTGGAS (340 aa)) is glucokinase. 23 to 28 (ADVGGT) serves as a coordination point for ATP. The 77-residue stretch at 341–417 (SAVFERIRQM…LKLATGLTGT (77 aa)) folds into the HTH rpiR-type domain. The interval 341–641 (SAVFERIRQM…SHGAAPAAKD (301 aa)) is putative HTH-type transcriptional regulator. Positions 377 to 396 (IVNIARKADVSQPTVIRFCR) form a DNA-binding region, H-T-H motif. Residues 461-600 (AIDILNNARR…AVGVAIRRAA (140 aa)) form the SIS domain. The chain crosses the membrane as a helical span at residues 576 to 596 (SMISRILHLVMIDILAVGVAI).

In the N-terminal section; belongs to the bacterial glucokinase family.

It localises to the membrane. It carries out the reaction D-glucose + ATP = D-glucose 6-phosphate + ADP + H(+). The polypeptide is Bifunctional protein glk (glk) (Burkholderia mallei (strain ATCC 23344)).